Here is a 548-residue protein sequence, read N- to C-terminus: Probable malate:quinone oxidoreductase (548 aa).

Residues 521–548 (DKPQAADSTPKPQLKPQPVQKEVADIAL) form a disordered region. Residues 530–541 (PKPQLKPQPVQK) show a composition bias toward low complexity.

It belongs to the MQO family. Requires FAD as cofactor.

It carries out the reaction (S)-malate + a quinone = a quinol + oxaloacetate. Its pathway is carbohydrate metabolism; tricarboxylic acid cycle; oxaloacetate from (S)-malate (quinone route): step 1/1. This Shigella boydii serotype 4 (strain Sb227) protein is Probable malate:quinone oxidoreductase.